Here is a 164-residue protein sequence, read N- to C-terminus: Large ribosomal subunit protein bL9 (164 aa).

This sequence belongs to the bacterial ribosomal protein bL9 family.

Functionally, binds to the 23S rRNA. The polypeptide is Large ribosomal subunit protein bL9 (Borrelia duttonii (strain Ly)).